A 313-amino-acid polypeptide reads, in one-letter code: Glutathione synthetase (313 aa).

In terms of domain architecture, ATP-grasp spans 125 to 309 (KIFVTEFADL…IASLFWDAVE (185 aa)). 151-207 (RKEFGDIIVKPLYGNGGAGIFHLHEADRNLASLLEMFGQLFREPYIVQRYLKDVRKG) provides a ligand contact to ATP. The Mg(2+) site is built by Glu-280 and Asn-282.

Belongs to the prokaryotic GSH synthase family. Mg(2+) serves as cofactor. Requires Mn(2+) as cofactor.

It catalyses the reaction gamma-L-glutamyl-L-cysteine + glycine + ATP = glutathione + ADP + phosphate + H(+). The protein operates within sulfur metabolism; glutathione biosynthesis; glutathione from L-cysteine and L-glutamate: step 2/2. The protein is Glutathione synthetase of Mesorhizobium japonicum (strain LMG 29417 / CECT 9101 / MAFF 303099) (Mesorhizobium loti (strain MAFF 303099)).